The chain runs to 277 residues: Small ribosomal subunit protein uS2 (277 aa).

Residues 226 to 277 are disordered; the sequence is GQQARADRGEDLGAAVEPVAEPALVEEAAAPVTEDEQVPAEAAAETERQSDA. The span at 239–257 shows a compositional bias: low complexity; that stretch reads AAVEPVAEPALVEEAAAPV.

Belongs to the universal ribosomal protein uS2 family.

The protein is Small ribosomal subunit protein uS2 of Sphingopyxis alaskensis (strain DSM 13593 / LMG 18877 / RB2256) (Sphingomonas alaskensis).